The primary structure comprises 832 residues: Envelope glycoprotein gp160 (832 aa).

An N-terminal signal peptide occupies residues 1-31 (MRVRGMQRNWQHLGKWGLLFLGILIICNAAD). Topologically, residues 32 to 660 (NLWVTVYYGV…ISNWLWYIKI (629 aa)) are extracellular. Residues C53 and C73 are joined by a disulfide bond. N-linked (GlcNAc...) asparagine; by host glycosylation is found at N87, N129, N132, N135, N146, N150, N177, N178, N188, N225, N232, N253, N267, N280, N286, N292, N322, N329, N345, and N352. Cystine bridges form between C118-C196, C125-C187, C130-C147, C209-C238, and C219-C230. Residues 130–146 (CTNATNNSQEKPGAMQN) form a V1 region. Residues 147–187 (CSFNMTTEVRDKKLKLSALFYRLDIVPIGNNNSSEYRLINC) form a V2 region. The tract at residues 287–320 (CTRPNNNTRKGIHLGPGQTFYATGAIIGDIRKAH) is V3. Residues C287 and C321 are joined by a disulfide bond. The segment at 354–364 (SSGGDLEITMH) is CD4-binding loop. Intrachain disulfides connect C368–C422 and C375–C395. The interval 375 to 395 (CDTSGLFNDTGSNNGTITLPC) is V4. N-linked (GlcNAc...) asparagine; by host glycans are attached at residues N382, N388, N419, N425, and N437. The interval 438–447 (ESNIETFRPE) is V5. A fusion peptide region spans residues 488–508 (AAGLGALFLGFLGDSREHMGA). Residues 550 to 568 (KQLQARVLAVERYLKDQQL) form an immunosuppression region. C574 and C580 form a disulfide bridge. N-linked (GlcNAc...) asparagine; by host glycans are attached at residues N587, N592, N601, and N613. Residues 609–643 (KEISNYSNIIYKLIEESQNQQEKNEQELLALDKWA) are a coiled coil. The interval 638-659 (ALDKWASLWNWFDISNWLWYIK) is MPER; binding to GalCer. Residues 661–681 (FIMIVGGLIGLRIVFAVLSIV) traverse the membrane as a helical segment. Residues 682 to 832 (NRVRKGYSPL…IRQGAERALL (151 aa)) lie on the Cytoplasmic side of the membrane. Residues 688–691 (YSPL) carry the YXXL motif; contains endocytosis signal motif. The segment at 695 to 717 (TLIPSPRGPDRPEGIEEGGGEQG) is disordered. C740 is lipidated: S-palmitoyl cysteine; by host. The short motif at 831 to 832 (LL) is the Di-leucine internalization motif element.

The protein belongs to the HIV-1 env protein family. In terms of assembly, the mature envelope protein (Env) consists of a homotrimer of non-covalently associated gp120-gp41 heterodimers. The resulting complex protrudes from the virus surface as a spike. There seems to be as few as 10 spikes on the average virion. Interacts with host CD4, CCR5 and CXCR4. Gp120 also interacts with the C-type lectins CD209/DC-SIGN and CLEC4M/DC-SIGNR (collectively referred to as DC-SIGN(R)). Gp120 and gp41 interact with GalCer. Gp120 interacts with host ITGA4/ITGB7 complex; on CD4+ T-cells, this interaction results in rapid activation of integrin ITGAL/LFA-1, which facilitates efficient cell-to-cell spreading of HIV-1. Gp120 interacts with cell-associated heparan sulfate; this interaction increases virus infectivity on permissive cells and may be involved in infection of CD4- cells. The mature envelope protein (Env) consists of a homotrimer of non-covalently associated gp120-gp41 heterodimers. The resulting complex protrudes from the virus surface as a spike. There seems to be as few as 10 spikes on the average virion. In terms of processing, highly glycosylated by host. The high number of glycan on the protein is reffered to as 'glycan shield' because it contributes to hide protein sequence from adaptive immune system. Palmitoylation of the transmembrane protein and of Env polyprotein (prior to its proteolytic cleavage) is essential for their association with host cell membrane lipid rafts. Palmitoylation is therefore required for envelope trafficking to classical lipid rafts, but not for viral replication. Post-translationally, specific enzymatic cleavages in vivo yield mature proteins. Envelope glycoproteins are synthesized as an inactive precursor that is heavily N-glycosylated and processed likely by host cell furin in the Golgi to yield the mature SU and TM proteins. The cleavage site between SU and TM requires the minimal sequence [KR]-X-[KR]-R. About 2 of the 9 disulfide bonds of gp41 are reduced by P4HB/PDI, following binding to CD4 receptor.

It localises to the virion membrane. The protein resides in the host cell membrane. It is found in the host endosome membrane. Its function is as follows. Oligomerizes in the host endoplasmic reticulum into predominantly trimers. In a second time, gp160 transits in the host Golgi, where glycosylation is completed. The precursor is then proteolytically cleaved in the trans-Golgi and thereby activated by cellular furin or furin-like proteases to produce gp120 and gp41. Attaches the virus to the host lymphoid cell by binding to the primary receptor CD4. This interaction induces a structural rearrangement creating a high affinity binding site for a chemokine coreceptor like CXCR4 and/or CCR5. Acts as a ligand for CD209/DC-SIGN and CLEC4M/DC-SIGNR, which are respectively found on dendritic cells (DCs), and on endothelial cells of liver sinusoids and lymph node sinuses. These interactions allow capture of viral particles at mucosal surfaces by these cells and subsequent transmission to permissive cells. HIV subverts the migration properties of dendritic cells to gain access to CD4+ T-cells in lymph nodes. Virus transmission to permissive T-cells occurs either in trans (without DCs infection, through viral capture and transmission), or in cis (following DCs productive infection, through the usual CD4-gp120 interaction), thereby inducing a robust infection. In trans infection, bound virions remain infectious over days and it is proposed that they are not degraded, but protected in non-lysosomal acidic organelles within the DCs close to the cell membrane thus contributing to the viral infectious potential during DCs' migration from the periphery to the lymphoid tissues. On arrival at lymphoid tissues, intact virions recycle back to DCs' cell surface allowing virus transmission to CD4+ T-cells. In terms of biological role, acts as a class I viral fusion protein. Under the current model, the protein has at least 3 conformational states: pre-fusion native state, pre-hairpin intermediate state, and post-fusion hairpin state. During fusion of viral and target intracellular membranes, the coiled coil regions (heptad repeats) assume a trimer-of-hairpins structure, positioning the fusion peptide in close proximity to the C-terminal region of the ectodomain. The formation of this structure appears to drive apposition and subsequent fusion of viral and target cell membranes. Complete fusion occurs in host cell endosomes and is dynamin-dependent, however some lipid transfer might occur at the plasma membrane. The virus undergoes clathrin-dependent internalization long before endosomal fusion, thus minimizing the surface exposure of conserved viral epitopes during fusion and reducing the efficacy of inhibitors targeting these epitopes. Membranes fusion leads to delivery of the nucleocapsid into the cytoplasm. The protein is Envelope glycoprotein gp160 of Human immunodeficiency virus type 1 group M subtype F1 (isolate VI850) (HIV-1).